A 272-amino-acid chain; its full sequence is 3-methyl-2-oxobutanoate hydroxymethyltransferase (272 aa).

Residues aspartate 51 and aspartate 90 each coordinate Mg(2+). Residues 51-52 (DS), aspartate 90, and lysine 120 contribute to the 3-methyl-2-oxobutanoate site. Glutamate 122 is a Mg(2+) binding site. Residue glutamate 189 is the Proton acceptor of the active site.

This sequence belongs to the PanB family. Homodecamer; pentamer of dimers. The cofactor is Mg(2+).

The protein resides in the cytoplasm. It catalyses the reaction 3-methyl-2-oxobutanoate + (6R)-5,10-methylene-5,6,7,8-tetrahydrofolate + H2O = 2-dehydropantoate + (6S)-5,6,7,8-tetrahydrofolate. Its pathway is cofactor biosynthesis; (R)-pantothenate biosynthesis; (R)-pantoate from 3-methyl-2-oxobutanoate: step 1/2. Catalyzes the reversible reaction in which hydroxymethyl group from 5,10-methylenetetrahydrofolate is transferred onto alpha-ketoisovalerate to form ketopantoate. This is 3-methyl-2-oxobutanoate hydroxymethyltransferase from Syntrophus aciditrophicus (strain SB).